A 385-amino-acid chain; its full sequence is Protein GOLM2 (385 aa).

At 1–12 the chain is on the cytoplasmic side; it reads MVGFGAPRRTGR. The helical; Signal-anchor for type II membrane protein transmembrane segment at 13–33 threads the bilayer; the sequence is LPPFVLVALLAVIGLLAFNYW. Residues 34-385 are Lumenal-facing; the sequence is SVSARQAALH…YHKDHLNETL (352 aa). A coiled-coil region spans residues 44 to 193; the sequence is DELLGLQAQV…KEELDKQPQK (150 aa). The segment at 169 to 385 is disordered; that stretch reads LAERKREYEE…YHKDHLNETL (217 aa). 2 stretches are compositionally biased toward basic and acidic residues: residues 170–193 and 211–220; these read AERK…QPQK and EVKEKIEDPS. The segment covering 265 to 283 has biased composition (polar residues); sequence LPSQSKSLLEKQPSLQPLS. Residues 285–299 are compositionally biased toward basic and acidic residues; that stretch reads TEHEVKKPLPDKKET. Residues 356–367 are compositionally biased toward acidic residues; the sequence is NGDDGNVEDDDH. A compositionally biased stretch (basic and acidic residues) spans 368–385; sequence DGQADAGEYHKDHLNETL.

It belongs to the GOLM family.

The protein localises to the membrane. The polypeptide is Protein GOLM2 (golm2) (Xenopus laevis (African clawed frog)).